The primary structure comprises 91 residues: MNKNELVSAVAEKAGLTKSDAASAVDAVFDVVQAELKNKGDIRLAGFGSFTVSHRAATKGRNPSTGAEVDIPARNVPKFTPGKGLKDAVNG.

Positions 57 to 91 (ATKGRNPSTGAEVDIPARNVPKFTPGKGLKDAVNG) are disordered.

Belongs to the bacterial histone-like protein family.

In terms of biological role, histone-like DNA-binding protein which is capable of wrapping DNA to stabilize it, and thus to prevent its denaturation under extreme environmental conditions. Binds to nod promoters and induces DNA binding. This chain is DNA-binding protein HRL53, found in Rhizobium leguminosarum.